Reading from the N-terminus, the 356-residue chain is S-adenosylmethionine:tRNA ribosyltransferase-isomerase (356 aa).

Belongs to the QueA family. In terms of assembly, monomer.

It localises to the cytoplasm. The enzyme catalyses 7-aminomethyl-7-carbaguanosine(34) in tRNA + S-adenosyl-L-methionine = epoxyqueuosine(34) in tRNA + adenine + L-methionine + 2 H(+). It functions in the pathway tRNA modification; tRNA-queuosine biosynthesis. Its function is as follows. Transfers and isomerizes the ribose moiety from AdoMet to the 7-aminomethyl group of 7-deazaguanine (preQ1-tRNA) to give epoxyqueuosine (oQ-tRNA). This chain is S-adenosylmethionine:tRNA ribosyltransferase-isomerase, found in Escherichia coli (strain ATCC 8739 / DSM 1576 / NBRC 3972 / NCIMB 8545 / WDCM 00012 / Crooks).